We begin with the raw amino-acid sequence, 384 residues long: Queuine tRNA-ribosyltransferase (384 aa).

Asp92 acts as the Proton acceptor in catalysis. Substrate contacts are provided by residues 92 to 96 (DSGGF), Asp146, Gln190, and Gly217. The interval 248 to 254 (GVGRPED) is RNA binding. The Nucleophile role is filled by Asp267. The interval 272–276 (TRHAR) is RNA binding; important for wobble base 34 recognition. Positions 305, 307, 310, and 337 each coordinate Zn(2+).

This sequence belongs to the queuine tRNA-ribosyltransferase family. Homodimer. Within each dimer, one monomer is responsible for RNA recognition and catalysis, while the other monomer binds to the replacement base PreQ1. The cofactor is Zn(2+).

The enzyme catalyses 7-aminomethyl-7-carbaguanine + guanosine(34) in tRNA = 7-aminomethyl-7-carbaguanosine(34) in tRNA + guanine. It functions in the pathway tRNA modification; tRNA-queuosine biosynthesis. In terms of biological role, catalyzes the base-exchange of a guanine (G) residue with the queuine precursor 7-aminomethyl-7-deazaguanine (PreQ1) at position 34 (anticodon wobble position) in tRNAs with GU(N) anticodons (tRNA-Asp, -Asn, -His and -Tyr). Catalysis occurs through a double-displacement mechanism. The nucleophile active site attacks the C1' of nucleotide 34 to detach the guanine base from the RNA, forming a covalent enzyme-RNA intermediate. The proton acceptor active site deprotonates the incoming PreQ1, allowing a nucleophilic attack on the C1' of the ribose to form the product. After dissociation, two additional enzymatic reactions on the tRNA convert PreQ1 to queuine (Q), resulting in the hypermodified nucleoside queuosine (7-(((4,5-cis-dihydroxy-2-cyclopenten-1-yl)amino)methyl)-7-deazaguanosine). This chain is Queuine tRNA-ribosyltransferase, found in Xylella fastidiosa (strain 9a5c).